The sequence spans 324 residues: tRNA dimethylallyltransferase (324 aa).

An ATP-binding site is contributed by 17 to 24 (GPTASGKT). 19–24 (TASGKT) provides a ligand contact to substrate. Interaction with substrate tRNA regions lie at residues 42–45 (DSAL), 166–170 (QRIQR), 251–256 (RCVGYR), and 284–291 (KRQITWLR).

This sequence belongs to the IPP transferase family. In terms of assembly, monomer. Requires Mg(2+) as cofactor.

The catalysed reaction is adenosine(37) in tRNA + dimethylallyl diphosphate = N(6)-dimethylallyladenosine(37) in tRNA + diphosphate. In terms of biological role, catalyzes the transfer of a dimethylallyl group onto the adenine at position 37 in tRNAs that read codons beginning with uridine, leading to the formation of N6-(dimethylallyl)adenosine (i(6)A). This chain is tRNA dimethylallyltransferase, found in Burkholderia vietnamiensis (strain G4 / LMG 22486) (Burkholderia cepacia (strain R1808)).